A 669-amino-acid chain; its full sequence is L-type lectin-domain containing receptor kinase IV.4 (669 aa).

The signal sequence occupies residues 1 to 23 (MFFIKLFTIFFLSFFWQSLKSSS). The Extracellular segment spans residues 24–294 (QIIDFTYNGF…TRVYRFYKNW (271 aa)). Residues 26 to 260 (IDFTYNGFRP…SEIFVLGWSF (235 aa)) are legume-lectin like. N-linked (GlcNAc...) asparagine glycans are attached at residues Asn-58, Asn-80, Asn-127, Asn-152, and Asn-185. A helical transmembrane segment spans residues 295 to 315 (VPLISLLLIPFLLIIFLVRFI). Residues 316–669 (MKRRRKFAEE…VAYSLLSSGR (354 aa)) lie on the Cytoplasmic side of the membrane. The 278-residue stretch at 350–627 (FKDKNILGSG…LQYLRGDAML (278 aa)) folds into the Protein kinase domain. ATP contacts are provided by residues 356 to 364 (LGSGGFGSV) and Lys-379. The Proton acceptor role is filled by Asp-475.

This sequence in the C-terminal section; belongs to the protein kinase superfamily. Ser/Thr protein kinase family. The protein in the N-terminal section; belongs to the leguminous lectin family.

It localises to the cell membrane. The catalysed reaction is L-seryl-[protein] + ATP = O-phospho-L-seryl-[protein] + ADP + H(+). The enzyme catalyses L-threonyl-[protein] + ATP = O-phospho-L-threonyl-[protein] + ADP + H(+). Functionally, involved in resistance response to the pathogenic oomycetes Phytophthora infestans and Phytophthora capsici and to the pathogenic bacteria Pseudomonas syringae. The protein is L-type lectin-domain containing receptor kinase IV.4 of Arabidopsis thaliana (Mouse-ear cress).